The sequence spans 148 residues: Snaclec stejaggregin-A subunit beta-2 (148 aa).

The signal sequence occupies residues 1 to 23 (MGQFIFVSFGLLVVLLSLSGAGA). Residues C27 and C38 are joined by a disulfide bond. Positions 34–145 (YDLYCYKVFK…CSRTHYVVCK (112 aa)) constitute a C-type lectin domain. N-linked (GlcNAc...) asparagine glycans are attached at residues N47 and N78. Cystine bridges form between C55–C144 and C121–C136.

This sequence belongs to the snaclec family. Heteromultimer; disulfide-linked. Expressed by the venom gland.

It localises to the secreted. In terms of biological role, interferes with one step of hemostasis (modulation of platelet aggregation, or coagulation cascade, for example). This is Snaclec stejaggregin-A subunit beta-2 from Trimeresurus stejnegeri (Chinese green tree viper).